The primary structure comprises 163 residues: Nucleotide-binding protein BcerKBAB4_1061 (163 aa).

Belongs to the YajQ family.

In terms of biological role, nucleotide-binding protein. The sequence is that of Nucleotide-binding protein BcerKBAB4_1061 from Bacillus mycoides (strain KBAB4) (Bacillus weihenstephanensis).